The primary structure comprises 463 residues: Hexokinase-7 (463 aa).

Residues 7–456 enclose the Hexokinase domain; the sequence is AAAEQVVAAL…SGLGAALIAA (450 aa). The segment at 62–199 is hexokinase small subdomain; that stretch reads NGTEEGLFYA…GLDMRVSALI (138 aa). G76, T77, and N78 together coordinate ADP. The D-glucose site is built by T165, K166, N200, and D201. The tract at residues 200-445 is hexokinase large subdomain; it reads NDTVGTLAAG…KSVAVKLAND (246 aa). T224 provides a ligand contact to ADP. Residues N227, E255, and E286 each contribute to the D-glucose site. Residue G410 coordinates ADP.

It belongs to the hexokinase family. As to expression, expressed in roots, leaves, flowers, immature seeds and seed coat.

The protein localises to the cytoplasm. The enzyme catalyses a D-hexose + ATP = a D-hexose 6-phosphate + ADP + H(+). It catalyses the reaction D-fructose + ATP = D-fructose 6-phosphate + ADP + H(+). It carries out the reaction D-glucose + ATP = D-glucose 6-phosphate + ADP + H(+). Its pathway is carbohydrate metabolism; hexose metabolism. It participates in carbohydrate degradation; glycolysis; D-glyceraldehyde 3-phosphate and glycerone phosphate from D-glucose: step 1/4. In terms of biological role, fructose and glucose phosphorylating enzyme. Functions in sugar signaling via a glycolysis-dependent manner under aerobic conditions, but its signaling role is suppressed when oxygen is deficient. The polypeptide is Hexokinase-7 (HXK7) (Oryza sativa subsp. japonica (Rice)).